Consider the following 288-residue polypeptide: Rhox homeobox family member 2 (288 aa).

The disordered stretch occupies residues 16 to 136 (SPAVDDEKEL…GLEPGNAQQP (121 aa)). Over residues 39-48 (VKEEEEDAQP) the composition is skewed to acidic residues. The segment covering 68-80 (GEEKDGGGEEKDG) has biased composition (basic and acidic residues). A DNA-binding region (homeobox) is located at residues 134-193 (QQPNVHAFTPLQLQELERIFQREQFPSEFLRRRLARSMNVTELAVQIWFENRRAKWRRHQ). Residues 186-195 (RAKWRRHQRA) carry the Nuclear localization signal motif.

It belongs to the paired-like homeobox family. PEPP subfamily. In terms of tissue distribution, testis. Not detected in epididymis nor placenta. In testis, mainly expressed in germ cells, but also detected in somatic cells such as Sertoli cells, Leydig cells and peritubular cells.

Its subcellular location is the nucleus. Transcription factor maybe involved in reproductive processes. Modulates expression of target genes encoding proteins involved in processes relevant to spermatogenesis. The polypeptide is Rhox homeobox family member 2 (Homo sapiens (Human)).